Consider the following 405-residue polypeptide: MKVGFALVLLWSLPITNVLAELPQPQNLTLLTLNTQYVLTWDWDQTTTGNSVSFTVEYMAKYKMKMKKKNWSRVCERTTRTRCDLTGSDLHYLGMYVLRVRASADGVNSDWVNKDFCPDIDASLGPPSRVELAPVGNLLDVTISDPLTSTQHSMKEHVLFLYYRILYWSRSDDPQGLKPKVLDSSNNLVTLPELEAWTWYCVMIQSRYDYYNKTSSYTEPQCMQTEGDTPYGQIFLYFLVSMMVCFLLVLLSSYAFFRFYRGLKNTFYPSIQLPAHIQEYLCDSSPGSDMPRLITADSEAELCCDKLTICPEVVLLEIHVPPPLTAPPSELEQDSGRRIRQDSGDSGIYSTEGGSAQQGRSGGEPIRRDQEVDSWQTLEQVKMEEMGRELADERDLDEGVVDICV.

The N-terminal stretch at 1-20 is a signal peptide; the sequence is MKVGFALVLLWSLPITNVLA. Over 21–233 the chain is Extracellular; that stretch reads ELPQPQNLTL…QTEGDTPYGQ (213 aa). 2 Fibronectin type-III domains span residues 22-123 and 126-228; these read LPQP…IDAS and PPSR…TEGD. N-linked (GlcNAc...) asparagine glycosylation is found at Asn-27 and Asn-70. Disulfide bonds link Cys-75–Cys-83 and Cys-201–Cys-222. Asn-212 carries an N-linked (GlcNAc...) asparagine glycan. A helical membrane pass occupies residues 234-254; sequence IFLYFLVSMMVCFLLVLLSSY. At 255 to 405 the chain is on the cytoplasmic side; that stretch reads AFFRFYRGLK…LDEGVVDICV (151 aa). Residues 325 to 374 are disordered; that stretch reads TAPPSELEQDSGRRIRQDSGDSGIYSTEGGSAQQGRSGGEPIRRDQEVDS. Residues 334–343 show a composition bias toward basic and acidic residues; it reads DSGRRIRQDS. Positions 348–359 are enriched in polar residues; the sequence is IYSTEGGSAQQG.

Belongs to the type II cytokine receptor family. Heterodimer with IFNAR2; forming the receptor for type I interferon.

It is found in the cell membrane. Functionally, together with IFNAR2, forms the heterodimeric receptor for type I interferons (including interferons alpha, beta, epsilon, omega and kappa). Type I interferon binding activates the JAK-STAT signaling cascade, resulting in transcriptional activation or repression of interferon-regulated genes that encode the effectors of the interferon response. Mechanistically, type I interferon-binding brings the IFNAR1 and IFNAR2 subunits into close proximity with one another, driving their associated Janus kinases (JAKs) (TYK2 bound to IFNAR1 and JAK1 bound to IFNAR2) to cross-phosphorylate one another. The activated kinases phosphorylate specific tyrosine residues on the intracellular domains of IFNAR1 and IFNAR2, forming docking sites for the STAT transcription factors. STAT proteins are then phosphorylated by the JAKs, promoting their translocation into the nucleus to regulate expression of interferon-regulated genes. The sequence is that of Interferon alpha/beta receptor 1a from Oncorhynchus mykiss (Rainbow trout).